Reading from the N-terminus, the 561-residue chain is Asparagine synthetase [glutamine-hydrolyzing] (561 aa).

The For GATase activity role is filled by C2. The Glutamine amidotransferase type-2 domain occupies 2-191 (CGIWALFGSD…PGHYEVLDLK (190 aa)). L-glutamine is bound by residues 49-53 (RLAVV), 75-77 (NGE), and D97. Positions 213 to 536 (HALYDNVEKL…PGRADWLSHY (324 aa)) constitute an Asparagine synthetase domain. ATP is bound by residues L256, I288, and 363-364 (SG). K385 bears the N6-acetyllysine mark. T545 bears the Phosphothreonine mark. A Phosphoserine modification is found at S557.

The enzyme catalyses L-aspartate + L-glutamine + ATP + H2O = L-asparagine + L-glutamate + AMP + diphosphate + H(+). It functions in the pathway amino-acid biosynthesis; L-asparagine biosynthesis; L-asparagine from L-aspartate (L-Gln route): step 1/1. This chain is Asparagine synthetase [glutamine-hydrolyzing] (ASNS), found in Pongo abelii (Sumatran orangutan).